The following is a 182-amino-acid chain: UPF0397 protein VS_II0189 (182 aa).

Helical transmembrane passes span 8–28, 41–61, 72–92, 110–130, and 146–166; these read VVVIAIGAALYGIGGLPMFGV, AVLALFSVLFGPIVGFLVGFI, WGVWLTWVLGSGIVGMVIGLF, FALFVVLALAGNVVGYGSSAF, and QLSIIAAGNTILIAVVGFLIL.

Belongs to the UPF0397 family.

The protein resides in the cell membrane. The polypeptide is UPF0397 protein VS_II0189 (Vibrio atlanticus (strain LGP32) (Vibrio splendidus (strain Mel32))).